Consider the following 469-residue polypeptide: Mitochondrial adenyl nucleotide antiporter SLC25A25 (469 aa).

The interval 1–165 (MLCLCLYVPV…LYWKHSTIFD (165 aa)) is regulatory N-terminal domain. Over 1–189 (MLCLCLYVPV…ERQTGMWWRH (189 aa)) the chain is Mitochondrial intermembrane. EF-hand domains are found at residues 47–80 (TYRQWKQKIVQAGDKDLDGQLDFEEFVHYLQDHE), 78–113 (DHEKKLRLVFKSLDKKNDGRIDAQEIMQSLRDLGVK), and 114–149 (ISEQQAEKILKSMDKNGTMTIDWNEWRDYHLLHPVE). Positions 60, 62, 64, 66, and 71 each coordinate Ca(2+). Residues 151–160 (IPEIILYWKH) are linker region. The interval 166–469 (VGENLTVPDE…LKITLGVQSR (304 aa)) is C-terminal transmembrane transporter domain. Solcar repeat units lie at residues 184–270 (GMWW…IKRL), 278–363 (LRIH…LKNA), and 375–463 (PGVF…LKIT). The chain crosses the membrane as a helical span at residues 190–207 (LVAGGGAGAVSRTCTAPL). At 208–244 (DRLKVLMQVHASRSNNMGIVGGFTQMIREGGARSLWR) the chain is on the mitochondrial matrix side. A helical membrane pass occupies residues 245–264 (GNGINVLKIAPESAIKFMAY). Residues 265-287 (EQIKRLVGSDQETLRIHERLVAG) lie on the Mitochondrial intermembrane side of the membrane. A helical transmembrane segment spans residues 288–301 (SLAGAIAQSSIYPM). The Mitochondrial matrix segment spans residues 302–337 (EVLKTRMALRKTGQYSGMLDCARRILAREGVAAFYK). Residues 338 to 357 (GYVPNMLGIIPYAGIDLAVY) traverse the membrane as a helical segment. Over 358–380 (ETLKNAWLQHYAVNSADPGVFVL) the chain is Mitochondrial intermembrane. Residues 381–398 (LACGTMSSTCGQLASYPL) form a helical membrane-spanning segment. Residues 399–437 (ALVRTRMQAQASIEGAPEVTMSSLFKHILRTEGAFGLYR) are Mitochondrial matrix-facing. A helical transmembrane segment spans residues 438–457 (GLAPNFMKVIPAVSISYVVY). Residues 458-469 (ENLKITLGVQSR) are Mitochondrial intermembrane-facing.

Belongs to the mitochondrial carrier (TC 2.A.29) family. Widely expressed. Expressed in fetal and adult liver, skeletal muscle, testis, ovary, hippocampus and caudate nucleus. In terms of tissue distribution, expressed in all tissues tested. As to expression, expression is restricted to kidney and lung.

It is found in the mitochondrion inner membrane. It carries out the reaction Mg(2+)(out) + phosphate(in) + ATP(out) = Mg(2+)(in) + phosphate(out) + ATP(in). With respect to regulation, activated by an increase in cytosolic calcium levels that induce a conformational change of the N-terminal regulatory domain, uncapping the channel and allowing transport. Electroneutral antiporter that most probably mediates the transport of adenyl nucleotides through the inner mitochondrial membrane. Originally identified as an ATP-magnesium/inorganic phosphate antiporter, it could have a broader specificity for adenyl nucleotides. By regulating the mitochondrial matrix adenyl nucleotide pool could adapt to changing cellular energetic demands and indirectly regulate adenyl nucleotide-dependent metabolic pathways. The chain is Mitochondrial adenyl nucleotide antiporter SLC25A25 from Homo sapiens (Human).